A 239-amino-acid chain; its full sequence is Diablo IAP-binding mitochondrial protein (239 aa).

The transit peptide at 1-21 (MAALKSWLSRSVTSFFRYRQC) directs the protein to the mitochondrion. An IAP-binding motif is present at residues 56-60 (AVPIA). Residues 217–239 (RQKTQEEGEERAESEQEAYLRED) form a disordered region.

The protein belongs to the Smac/DIABLO protein family. As to quaternary structure, homodimer. Interacts with BIRC2/c-IAP1 (via BIR3 domain). Interacts with BIRC6/BRUCE; inhibits BIRC6 activity. Interacts with BIRC7/livin. Interacts with XIAP/BIRC4 (via BIR3 domain). Interacts with the monomeric and dimeric form of BIRC5/survivin. Interacts with AREL1 (via HECT domain); in the cytoplasm following induction of apoptosis. Interacts with BEX3. In terms of processing, ubiquitinated by BIRC7/livin. Ubiquitinated by BIRC6. Post-translationally, the precursor form is proteolytically cleaved by mitochondrial processing peptidase MPP to remove the transit peptide and produce an intermediate form. This is then processed by PARL to produce the mature cleaved form which is released from mitochondria into the cytosol in apoptotic cells. Ubiquitously expressed with highest expression in testis. Expression is also high in heart, liver, kidney, spleen, prostate and ovary. Low in brain, lung, thymus and peripheral blood leukocytes. Isoform 3 is ubiquitously expressed.

The protein localises to the mitochondrion. It is found in the cytoplasm. Its subcellular location is the cytosol. Functionally, promotes apoptosis by activating caspases in the cytochrome c/Apaf-1/caspase-9 pathway. Acts by opposing the inhibitory activity of inhibitor of apoptosis proteins (IAP). Inhibits the activity of BIRC6/BRUCE by inhibiting its binding to caspases. Attenuates the stability and apoptosis-inhibiting activity of XIAP/BIRC4 by promoting XIAP/BIRC4 ubiquitination and degradation through the ubiquitin-proteasome pathway. Also disrupts XIAP/BIRC4 interacting with processed caspase-9 and promotes caspase-3 activation. In terms of biological role, defective in the capacity to down-regulate the XIAP/BIRC4 abundance. The sequence is that of Diablo IAP-binding mitochondrial protein from Homo sapiens (Human).